The sequence spans 182 residues: Glutamyl-tRNA(Gln) amidotransferase subunit F, mitochondrial (182 aa).

Belongs to the GatF family. Subunit of the heterotrimeric GatFAB amidotransferase (AdT) complex, composed of A, B and F subunits.

It is found in the mitochondrion inner membrane. The catalysed reaction is L-glutamyl-tRNA(Gln) + L-glutamine + ATP + H2O = L-glutaminyl-tRNA(Gln) + L-glutamate + ADP + phosphate + H(+). Allows the formation of correctly charged Gln-tRNA(Gln) through the transamidation of misacylated Glu-tRNA(Gln) in the mitochondria. The reaction takes place in the presence of glutamine and ATP through an activated gamma-phospho-Glu-tRNA(Gln). Required for proper protein synthesis within the mitochondrion. This is Glutamyl-tRNA(Gln) amidotransferase subunit F, mitochondrial from Candida tropicalis (strain ATCC MYA-3404 / T1) (Yeast).